The primary structure comprises 72 residues: Translation initiation factor IF-1 (72 aa).

The region spanning 1 to 72 (MAKDDVIEID…DKGRITYRYK (72 aa)) is the S1-like domain.

Belongs to the IF-1 family. As to quaternary structure, component of the 30S ribosomal translation pre-initiation complex which assembles on the 30S ribosome in the order IF-2 and IF-3, IF-1 and N-formylmethionyl-tRNA(fMet); mRNA recruitment can occur at any time during PIC assembly.

The protein resides in the cytoplasm. Its function is as follows. One of the essential components for the initiation of protein synthesis. Stabilizes the binding of IF-2 and IF-3 on the 30S subunit to which N-formylmethionyl-tRNA(fMet) subsequently binds. Helps modulate mRNA selection, yielding the 30S pre-initiation complex (PIC). Upon addition of the 50S ribosomal subunit IF-1, IF-2 and IF-3 are released leaving the mature 70S translation initiation complex. The polypeptide is Translation initiation factor IF-1 (Campylobacter fetus subsp. fetus (strain 82-40)).